A 381-amino-acid polypeptide reads, in one-letter code: Cytosolic acyl coenzyme A thioester hydrolase (381 aa).

The HotDog ACOT-type 1 domain maps to 51–169 (PGHCIAMGRI…TLWYVPLSLK (119 aa)). Residue Asn67 is part of the active site. N6-acetyllysine is present on residues Lys169 and Lys199. In terms of domain architecture, HotDog ACOT-type 2 spans 225–339 (SYSQSSLIHL…FFTYVSLNQE (115 aa)). The active site involves Asp256. Residue Lys284 is modified to N6-acetyllysine. The disordered stretch occupies residues 343–381 (LPVPQLVPETEDEKKRFEEGKGRYLQMKAKRQGHTEPQP). Positions 354-364 (DEKKRFEEGKG) are enriched in basic and acidic residues.

Homohexamer. Post-translationally, the N-terminus is blocked. As to expression, isoform 1 is expressed constitutively in brain and testis. Isoform 2 is induced in liver by treatment with the peroxisome proliferator.

It localises to the cytoplasm. The protein localises to the cytosol. The enzyme catalyses hexadecanoyl-CoA + H2O = hexadecanoate + CoA + H(+). The catalysed reaction is dodecanoyl-CoA + H2O = dodecanoate + CoA + H(+). It catalyses the reaction tetradecanoyl-CoA + H2O = tetradecanoate + CoA + H(+). It carries out the reaction decanoyl-CoA + H2O = decanoate + CoA + H(+). The enzyme catalyses octanoyl-CoA + H2O = octanoate + CoA + H(+). The catalysed reaction is octadecanoyl-CoA + H2O = octadecanoate + CoA + H(+). It catalyses the reaction (9Z)-octadecenoyl-CoA + H2O = (9Z)-octadecenoate + CoA + H(+). Its pathway is lipid metabolism; fatty acid metabolism. Its function is as follows. Catalyzes the hydrolysis of acyl-CoAs into free fatty acids and coenzyme A (CoASH), regulating their respective intracellular levels. Preferentially hydrolyzes palmitoyl-CoA, but has a broad specificity acting on other fatty acyl-CoAs with chain-lengths of C8-C18. May play an important physiological function in brain. The chain is Cytosolic acyl coenzyme A thioester hydrolase (Acot7) from Rattus norvegicus (Rat).